A 508-amino-acid polypeptide reads, in one-letter code: Probable protein kinase UbiB (508 aa).

One can recognise a Protein kinase domain in the interval 118–494 (DFDLKPVASA…QKRQNFLLLL (377 aa)). Residues 124–132 (VASASVAQV) and K151 each bind ATP. Catalysis depends on D286, which acts as the Proton acceptor. A helical transmembrane segment spans residues 488-508 (QNFLLLLIAILLAALLAKSLL).

It belongs to the ABC1 family. UbiB subfamily.

It localises to the cell inner membrane. The protein operates within cofactor biosynthesis; ubiquinone biosynthesis [regulation]. Functionally, is probably a protein kinase regulator of UbiI activity which is involved in aerobic coenzyme Q (ubiquinone) biosynthesis. This chain is Probable protein kinase UbiB, found in Chromobacterium violaceum (strain ATCC 12472 / DSM 30191 / JCM 1249 / CCUG 213 / NBRC 12614 / NCIMB 9131 / NCTC 9757 / MK).